The sequence spans 173 residues: MASPRHILLINGPNLNLLGTREPQIYGSTTLHDIEQASQTLASSLGLRLTTFQSNHEGAIIDRIHQAAGFVPSPPSPSPSSAATTTEAGLGPGDKVSAIIINPGAYTHTSIGIRDALLGTGIPFVEVHVSNVHAREAFRHHSYLSDKAVAVICGLGPFGYSAALDFLGRHMKF.

The Proton acceptor role is filled by Y26. Substrate-binding residues include N102, H108, and D115. The active-site Proton donor is the H128. Substrate contacts are provided by residues 129–130 (VS) and R139.

It belongs to the type-II 3-dehydroquinase family. As to quaternary structure, homododecamer. Adopts a ring-like structure, composed of an arrangement of two hexameric rings stacked on top of one another.

The catalysed reaction is 3-dehydroquinate = 3-dehydroshikimate + H2O. It participates in aromatic compound metabolism; 3,4-dihydroxybenzoate biosynthesis; 3,4-dihydroxybenzoate from 3-dehydroquinate: step 1/2. Functionally, 3-dehydroquinate dehydratase; part of the qa gene cluster that mediates the catabolism of quinic acid (QA) and as such, allows the use of QA as a sole carbon source. Catalyzes the second reaction in the inducible quinic acid catabolic pathway by converting 3-dehydroquinate into 3-dehydroshikimate. The qa cluster encodes 3 inducible enymes (qa-2, qa-3 and qa-4) catalyzing the first three reactions in the catabolism of quinic acid to protocatechuic acid (also known as 3,4-Dihydroxybenzoic acid). This is Catabolic 3-dehydroquinase from Neurospora crassa (strain ATCC 24698 / 74-OR23-1A / CBS 708.71 / DSM 1257 / FGSC 987).